A 244-amino-acid chain; its full sequence is B3 domain-containing protein At2g36080 (244 aa).

Positions 38–144 (FEKPLTPSDV…RFFIGWRRRG (107 aa)) form a DNA-binding region, TF-B3.

It is found in the nucleus. The chain is B3 domain-containing protein At2g36080 (ARF31) from Arabidopsis thaliana (Mouse-ear cress).